Consider the following 345-residue polypeptide: RNA polymerase II holoenzyme cyclin-like subunit (345 aa).

Residues 23–147 (ESRRKLLLLE…KLAEFEFYLI (125 aa)) form the Cyclin N-terminal domain.

This sequence belongs to the cyclin family. Cyclin C subfamily. In terms of assembly, component of the SRB8-11 complex, a regulatory module of the Mediator complex.

Its subcellular location is the nucleus. Functionally, component of the SRB8-11 complex. The SRB8-11 complex is a regulatory module of the Mediator complex which is itself involved in regulation of basal and activated RNA polymerase II-dependent transcription. The SRB8-11 complex may be involved in the transcriptional repression of a subset of genes regulated by Mediator. It may inhibit the association of the Mediator complex with RNA polymerase II to form the holoenzyme complex. The SRB8-11 complex phosphorylates the C-terminal domain (CTD) of the largest subunit of RNA polymerase II. The chain is RNA polymerase II holoenzyme cyclin-like subunit (SSN8) from Debaryomyces hansenii (strain ATCC 36239 / CBS 767 / BCRC 21394 / JCM 1990 / NBRC 0083 / IGC 2968) (Yeast).